The chain runs to 872 residues: Leucine-rich repeat-containing protein 66 (872 aa).

Residues 4–24 (FYVRVTILVTGLCFVETVTTP) traverse the membrane as a helical segment. Asn-45 and Asn-108 each carry an N-linked (GlcNAc...) asparagine glycan. 5 LRR repeats span residues 142–164 (RLQVLILQRNQLSGTPKGLWKLK), 165–186 (SLRSLDLSFNRIVHIGLSDFHG), 189–210 (QLESIYLKSNKICTIHPKAFKG), 213–234 (KLQVVDLRSNALTTLVPIVTIA), and 239–259 (HLELGLADNQWQCSESNVNFQ). The tract at residues 339-363 (LRGMWPQSPVELRDSQDEQVTDRKD) is disordered. Basic and acidic residues predominate over residues 349–363 (ELRDSQDEQVTDRKD). Residues 371 to 391 (LAICLSVFITFVVAFCLGAFA) traverse the membrane as a helical segment. A compositionally biased stretch (polar residues) spans 467-483 (QMLGSNGTDPGHQQSPE). Disordered regions lie at residues 467-501 (QMLGSNGTDPGHQQSPEQLKDSNESRSGDSIVLPS), 560-579 (GTFPSSVESRRDDLHPSQPR), 695-761 (NYES…SQRI), and 776-872 (LISG…SKHW). Residue Asn-472 is glycosylated (N-linked (GlcNAc...) asparagine). Positions 484-493 (QLKDSNESRS) are enriched in basic and acidic residues. At Ser-718 the chain carries Phosphoserine. 3 stretches are compositionally biased toward polar residues: residues 725–736 (SVENDGTSQPLP), 746–760 (SVTSAESVEDLTSQR), and 785–805 (CETNQENDSSSLDPENRSTWP). The residue at position 752 (Ser-752) is a Phosphoserine. Over residues 831-841 (VDWHYSLRDLE) the composition is skewed to basic and acidic residues.

The protein localises to the membrane. This chain is Leucine-rich repeat-containing protein 66 (Lrrc66), found in Mus musculus (Mouse).